Reading from the N-terminus, the 274-residue chain is Oxidoreductase stcQ (274 aa).

This sequence belongs to the avfA family.

It functions in the pathway mycotoxin biosynthesis; sterigmatocystin biosynthesis. Functionally, oxidoreductase; part of the gene cluster that mediates the biosynthesis of sterigmatocystin (ST), a polyketide-derived furanocoumarin which is part of the most toxic and carcinogenic compounds among the known mycotoxins. The first step in the biosynthesis of sterigmatocystin is the production of hexanoate by the fatty acid synthase (FAS) units stcJ and stcK. The polyketide backbone is assembled by the non-reducing polyketide synthase stcA by condensation of the starter hexanoyl-CoA and 7 malonyl-CoA extender units followed by cyclization and release of norsolorinic acid. Norsolorinic acid is the first stable intermediate in the biosynthesis of sterigmatocystin and is converted into averantin (AVN) by the ketoreductase stcE which reduces the hexanoate ketone to an alcohol. Averantin is then oxidized into 5'-hydroxyaverantin (HAVN) by the cytochrome P450 monooxygenase stcF. 5'-hydroxyaverantin is further converted to 5'-oxyaverantin (OAVN) by the 5'-hydroxyaverantin dehydrogenase stcG. The next step is the conversion of OAVN into averufin (AVF) which is catalyzed by a yet to be identified enzyme. The cytochrome P450 monooxygenase stcB and the flavin-binding monooxygenase stcW are both required for the conversion of averufin to 1-hydroxyversicolorone. The esterase stcI probably catalyzes the formation of versiconal hemiacetal acetate from 1-hydroxyversicolorone. The oxydoreductase stcN then probably catalyzes the biosynthetic step from versiconal to versicolorin B (VERB). The next step is performed by the versicolorin B desaturase stcL to produce versicolorin A (VERA). The ketoreductase stcU and the cytochrome P450 monooxygenase stcS are involved in the conversion of versicolorin A to demethylsterigmatocystin. The Baeyer-Villiger oxidas stcQ and the reductase stcR might be involved in the biosynthetic step from versicolorin A to demethylsterigmatocystin. The final step in the biosynthesis of sterigmatocystin is the methylation of demethylsterigmatocystin catalyzed by the methyltransferase stcP. The sequence is that of Oxidoreductase stcQ from Emericella nidulans (strain FGSC A4 / ATCC 38163 / CBS 112.46 / NRRL 194 / M139) (Aspergillus nidulans).